A 281-amino-acid polypeptide reads, in one-letter code: sn-glycerol-3-phosphate transport system permease protein UgpE (281 aa).

Helical transmembrane passes span 16-36 (LILG…AATL), 85-105 (FSIT…IVWF), 113-133 (FFWM…FPTV), 142-162 (LDSY…TFLF), 202-222 (ALFV…LLII), and 247-267 (WNSV…IVLV). Residues 77–268 (LLNSFVMAFS…IPPVVIVLVM (192 aa)) form the ABC transmembrane type-1 domain.

Belongs to the binding-protein-dependent transport system permease family. UgpAE subfamily. As to quaternary structure, the complex is composed of two ATP-binding proteins (UgpC), two transmembrane proteins (UgpA and UgpE) and a solute-binding protein (UgpB).

The protein resides in the cell inner membrane. Its function is as follows. Part of the ABC transporter complex UgpBAEC involved in sn-glycerol-3-phosphate (G3P) import. Probably responsible for the translocation of the substrate across the membrane. This chain is sn-glycerol-3-phosphate transport system permease protein UgpE (ugpE), found in Escherichia coli O157:H7.